We begin with the raw amino-acid sequence, 200 residues long: Transcription factor FapR (200 aa).

Belongs to the FapR family.

In terms of biological role, transcriptional factor involved in regulation of membrane lipid biosynthesis by repressing genes involved in fatty acid and phospholipid metabolism. This Caldanaerobacter subterraneus subsp. tengcongensis (strain DSM 15242 / JCM 11007 / NBRC 100824 / MB4) (Thermoanaerobacter tengcongensis) protein is Transcription factor FapR.